Here is a 210-residue protein sequence, read N- to C-terminus: Small ribosomal subunit protein uS3 (210 aa).

The KH type-2 domain occupies 17 to 86 (IDEFLEKELR…NPQIEVEEIK (70 aa)).

This sequence belongs to the universal ribosomal protein uS3 family. In terms of assembly, part of the 30S ribosomal subunit.

Its function is as follows. Binds the lower part of the 30S subunit head. This chain is Small ribosomal subunit protein uS3, found in Pyrococcus furiosus (strain ATCC 43587 / DSM 3638 / JCM 8422 / Vc1).